A 207-amino-acid chain; its full sequence is MPRIIKHLGRVDYEPTWRAMQAFTDSRGAETRDELWVVEHPPVFTQGLAGKPEHLLQQNDVPVVKTDRGGQITYHGPGQLVVYLLVDFKRMHVGVRELVRRIEQAIIDMLAEQGIAANGDVDAPGVYVDGAKIASLGLRIKNGATYHGLSLNVDMDLTPFSWINPCGYANLKVTQMKNLGVNLTVAEAADKLLPHLERHLSTSKETA.

The BPL/LPL catalytic domain occupies 29-204 (AETRDELWVV…HLERHLSTSK (176 aa)). Substrate is bound by residues 68-75 (RGGQITYH), 135-137 (SLG), and 148-150 (GLS). Cys166 acts as the Acyl-thioester intermediate in catalysis.

It belongs to the LipB family.

The protein resides in the cytoplasm. It carries out the reaction octanoyl-[ACP] + L-lysyl-[protein] = N(6)-octanoyl-L-lysyl-[protein] + holo-[ACP] + H(+). The protein operates within protein modification; protein lipoylation via endogenous pathway; protein N(6)-(lipoyl)lysine from octanoyl-[acyl-carrier-protein]: step 1/2. Catalyzes the transfer of endogenously produced octanoic acid from octanoyl-acyl-carrier-protein onto the lipoyl domains of lipoate-dependent enzymes. Lipoyl-ACP can also act as a substrate although octanoyl-ACP is likely to be the physiological substrate. The sequence is that of Octanoyltransferase from Chromobacterium violaceum (strain ATCC 12472 / DSM 30191 / JCM 1249 / CCUG 213 / NBRC 12614 / NCIMB 9131 / NCTC 9757 / MK).